We begin with the raw amino-acid sequence, 89 residues long: Defensin-like protein 147 (89 aa).

Residues Met1–Gly24 form the signal peptide. 4 disulfide bridges follow: Cys34/Cys82, Cys46/Cys66, Cys51/Cys79, and Cys55/Cys81.

The protein belongs to the DEFL family. In terms of tissue distribution, expressed in flower buds, but not in stems, roots or rosette leaves.

The protein resides in the secreted. In Arabidopsis thaliana (Mouse-ear cress), this protein is Defensin-like protein 147 (LCR1).